Reading from the N-terminus, the 673-residue chain is Potassium voltage-gated channel subfamily KQT member 1 (673 aa).

Disordered regions lie at residues 1-28 and 61-80; these read MAAA…RGSA and GPSS…LGPR. Over 1–118 the chain is Cytoplasmic; sequence MAAATSPPRA…YNFLERPTGW (118 aa). Ser-27 carries the phosphoserine modification. Residues 66-75 are compositionally biased toward low complexity; that stretch reads AAPAASPAAA. The chain crosses the membrane as a helical span at residues 119–140; the sequence is KCFVYHFAVFLIVLVCLIFSVL. The Extracellular portion of the chain corresponds to 141–151; sequence STIEQYVALAT. A helical membrane pass occupies residues 152-174; that stretch reads GTLFWMEIVLVVFFGTEYAVRLW. Over 175–190 the chain is Cytoplasmic; it reads SAGCRSKYVGIWGRLR. Residues 191 to 216 traverse the membrane as a helical segment; sequence FARKPISIIDLIVVVASMVVLCVGSK. Topologically, residues 217-224 are extracellular; sequence GQVFATSA. Residues 225–240 traverse the membrane as a helical; Voltage-sensor segment; that stretch reads IRGIRFLQILRMLHVD. The interval 236–244 is interaction with KCNE3; the sequence is MLHVDRQGG. The Cytoplasmic segment spans residues 241 to 258; it reads RQGGTWRLLGSVVFIHRQ. Gln-242 lines the a 1,2-diacyl-sn-glycero-3-phospho-(1D-myo-inositol-4,5-bisphosphate) pocket. The helical transmembrane segment at 259-281 threads the bilayer; that stretch reads ELITTLYIGFLGLIFSSYFVYLA. Residues 282-297 are Extracellular-facing; that stretch reads EKDAVNESGQVEFGSY. Asn-287 is a glycosylation site (N-linked (GlcNAc...) asparagine). The pore-forming intramembrane region spans 298-318; that stretch reads ADALWWGVVTVTTIGYGDKVP. The Extracellular segment spans residues 319 to 320; sequence QT. A helical transmembrane segment spans residues 321–346; sequence WVGKTIASCFSVFAISFFALPAGILG. The Cytoplasmic segment spans residues 347-673; the sequence is SGFALKVQQK…VPGRGPEEGS (327 aa). Residues 368–380 are interaction with CALM; the sequence is AAASLIQTAWRCY. Phosphoserine is present on residues Ser-405 and Ser-407. The tract at residues 514–528 is interaction with CALM; calcium-dependent; it reads KVIRRMQYFVAKKKF. The interval 534–571 is interaction with KCNE1 C-terminus; the sequence is PYDVRDVIEQYSQGHLNLMVRIKELQRRLDQSIGRPAL. An interaction with AKAP9 region spans residues 587 to 615; it reads IGARLNRVEDKVTQLDQRLELITDMLQQL. A C-terminal assembly domain (tetramerization) region spans residues 588-619; the sequence is GARLNRVEDKVTQLDQRLELITDMLQQLLSLH. A disordered region spans residues 619 to 673; it reads HRGGTPGSRAPGGGGAQVAQPCSGGSINPELFLPSNALPTYEQLTVPGRGPEEGS. A compositionally biased stretch (gly residues) spans 622 to 634; it reads GTPGSRAPGGGGA.

It belongs to the potassium channel family. KQT (TC 1.A.1.15) subfamily. Kv7.1/KCNQ1 sub-subfamily. In terms of assembly, tetramer. Heterotetramer with KCNE1; targets to the membrane raft. Interacts (via C-terminus) with CALM; forms a heterooctameric structure (with 4:4 KCNQ1:CALM stoichiometry) in a calcium-independent manner. Interacts with AKAP9; targets protein kinase A (PKA) catalytic and regulatory subunits and protein phosphatase 1 (PP1) to the KCNQ1-KCNE1 complex, allowing PKA-mediated phosphorylation and increase of delayed rectifier potassium channel activity. Interacts with KCNE2; form a heterooligomer complex that targets to the membrane raft and leading to currents with an apparently instantaneous activation, a rapid deactivation process and a linear current-voltage relationship and decreases the amplitude of the outward current. Interacts with AP2M1; mediates estrogen-induced internalization via clathrin-coated vesicles. Interacts with NEDD4L; promotes internalization and decreases I(Ks) currents. Interacts with USP2; counteracts the NEDD4L-specific down-regulation of I(Ks) and restore plasma membrane localization. Heterotetramer with KCNQ5; has a voltage-gated potassium channel activity. Interacts with KCNE3; four KCNE3 molecules are bound to one KCNQ1 tetramer (4:4 KCNQ1:KCNE3 stoichiometry); alters membrane raft localization; affects KCNQ1 structure and gating properties. Interacts with KCNE4; impairs KCNQ1 localization in lipid rafts and inhibits voltage-gated potassium channel activity. Interacts with KCNE5; impairs KCNQ1 localization in lipid rafts and only conducts current upon strong and continued depolarization. Interacts with SLC5A3; forms coregulatory channel-transporter complexes that modulate Na(+)-coupled myo-inositol influx through the transporter. Ubiquitinated by NEDD4L; promotes internalization. The ubiquitinylated form is internalized through a clathrin-mediated endocytosis by interacting with AP2M1 and is recycled back to the cell membrane via RAB4A and RAB11A. In terms of processing, deubiquitinated by USP2; counteracts the NEDD4L-specific down-regulation of I(Ks) and restores the membrane localization.

The protein resides in the cell membrane. It localises to the cytoplasmic vesicle membrane. Its subcellular location is the early endosome. It is found in the membrane raft. The protein localises to the endoplasmic reticulum. The protein resides in the basolateral cell membrane. It localises to the apical cell membrane. It carries out the reaction K(+)(in) = K(+)(out). With respect to regulation, PIP2 molecule is essential to activate KCNQ channels by inducing the coupling of the voltage-sensing domain (VSD) and the pore-forming domain (PD). Upon channel activation, PIP2 disrupts the VSD-calmodulin/CALM interactions, causing the release of CALM from the VSD which triggers the opening of the gate. Calcium potentiates KCNQ1 channel current through calcium-bound CALM. Calcium-bound CALM competes with PIP2 to stabilize the channel open state. Pore-forming subunit of the voltage-gated potassium (Kv) channel involved in the regulation of cardiomyocyte excitability and important in normal development and functions of myocardium, inner ear, stomach and colon. Associates with KCNE beta subunits that modulates current kinetics. Induces a voltage-dependent by rapidly activating and slowly deactivating potassium-selective outward current. Also promotes a delayed voltage activated potassium current showing outward rectification characteristic. During beta-adrenergic receptor stimulation participates in cardiac repolarization by associating with KCNE1 to form the I(Ks) cardiac potassium current that increases the amplitude and slows down the activation kinetics of outward potassium current I(Ks). Muscarinic agonist oxotremorine-M strongly suppresses KCNQ1/KCNE1 current. When associated with KCNE3, forms the potassium channel that is important for cyclic AMP-stimulated intestinal secretion of chloride ions. This interaction with KCNE3 is reduced by 17beta-estradiol, resulting in the reduction of currents. During conditions of increased substrate load, maintains the driving force for proximal tubular and intestinal sodium ions absorption, gastric acid secretion, and cAMP-induced jejunal chloride ions secretion. Allows the provision of potassium ions to the luminal membrane of the secretory canaliculus in the resting state as well as during stimulated acid secretion. When associated with KCNE2, forms a heterooligomer complex leading to currents with an apparently instantaneous activation, a rapid deactivation process and a linear current-voltage relationship and decreases the amplitude of the outward current. When associated with KCNE4, inhibits voltage-gated potassium channel activity. When associated with KCNE5, this complex only conducts current upon strong and continued depolarization. Also forms a heterotetramer with KCNQ5 that has a voltage-gated potassium channel activity. Binds with phosphatidylinositol 4,5-bisphosphate. KCNQ1-KCNE2 channel associates with Na(+)-coupled myo-inositol symporter in the apical membrane of choroid plexus epithelium and regulates the myo-inositol gradient between blood and cerebrospinal fluid with an impact on neuron excitability. The polypeptide is Potassium voltage-gated channel subfamily KQT member 1 (Sus scrofa (Pig)).